The primary structure comprises 95 residues: Histone-like DNA-binding protein (95 aa).

Belongs to the bacterial histone-like protein family.

This is Histone-like DNA-binding protein from Rickettsia rickettsii.